A 155-amino-acid chain; its full sequence is Small ribosomal subunit protein uS7c (155 aa).

It belongs to the universal ribosomal protein uS7 family. In terms of assembly, part of the 30S ribosomal subunit.

It localises to the plastid. It is found in the chloroplast. Functionally, one of the primary rRNA binding proteins, it binds directly to 16S rRNA where it nucleates assembly of the head domain of the 30S subunit. The polypeptide is Small ribosomal subunit protein uS7c (Beta vulgaris (Sugar beet)).